Consider the following 99-residue polypeptide: Acylphosphatase-2 (99 aa).

Position 2 is an N-acetylserine (Ser2). One can recognise an Acylphosphatase-like domain in the interval 9–99 (SVDYEVFGRV…LEYSNFSIRY (91 aa)). Catalysis depends on residues Arg24 and Asn42. At Ser93 the chain carries Phosphoserine.

The protein belongs to the acylphosphatase family.

The enzyme catalyses an acyl phosphate + H2O = a carboxylate + phosphate + H(+). Its function is as follows. Its physiological role is not yet clear. The polypeptide is Acylphosphatase-2 (ACYP2) (Homo sapiens (Human)).